Consider the following 189-residue polypeptide: Peroxiredoxin sll1621 (189 aa).

The 176-residue stretch at 2–177 (TPERVPSVVF…MLAYLKGAEA (176 aa)) folds into the Thioredoxin domain. Cys-55 functions as the Cysteine sulfenic acid (-SOH) intermediate (for peroxiredoxin activity) in the catalytic mechanism.

The protein belongs to the peroxiredoxin family. Prx5 subfamily. In terms of assembly, monomer.

The enzyme catalyses a hydroperoxide + 2 glutathione = an alcohol + glutathione disulfide + H2O. Thiol-specific peroxidase that catalyzes the reduction of hydrogen peroxide and organic hydroperoxides to water and alcohols, respectively. Plays a role in cell protection against oxidative stress by detoxifying peroxides. In Synechocystis sp. (strain ATCC 27184 / PCC 6803 / Kazusa), this protein is Peroxiredoxin sll1621.